The chain runs to 231 residues: 5'-methylthioadenosine/S-adenosylhomocysteine nucleosidase (231 aa).

The active-site Proton acceptor is the glutamate 12. Residues glycine 78, isoleucine 153, and 174 to 175 (ME) contribute to the substrate site. The Proton donor role is filled by aspartate 198.

This sequence belongs to the PNP/UDP phosphorylase family. MtnN subfamily.

The enzyme catalyses S-adenosyl-L-homocysteine + H2O = S-(5-deoxy-D-ribos-5-yl)-L-homocysteine + adenine. It carries out the reaction S-methyl-5'-thioadenosine + H2O = 5-(methylsulfanyl)-D-ribose + adenine. It catalyses the reaction 5'-deoxyadenosine + H2O = 5-deoxy-D-ribose + adenine. It participates in amino-acid biosynthesis; L-methionine biosynthesis via salvage pathway; S-methyl-5-thio-alpha-D-ribose 1-phosphate from S-methyl-5'-thioadenosine (hydrolase route): step 1/2. Its function is as follows. Catalyzes the irreversible cleavage of the glycosidic bond in both 5'-methylthioadenosine (MTA) and S-adenosylhomocysteine (SAH/AdoHcy) to adenine and the corresponding thioribose, 5'-methylthioribose and S-ribosylhomocysteine, respectively. Also cleaves 5'-deoxyadenosine, a toxic by-product of radical S-adenosylmethionine (SAM) enzymes, into 5-deoxyribose and adenine. This is 5'-methylthioadenosine/S-adenosylhomocysteine nucleosidase from Shewanella putrefaciens (strain CN-32 / ATCC BAA-453).